A 475-amino-acid polypeptide reads, in one-letter code: Bifunctional protein HldE (475 aa).

Positions 1 to 318 (MKVTLPDFER…ENAVRGRAET (318 aa)) are ribokinase. 195 to 198 (NLSE) provides a ligand contact to ATP. D264 is a catalytic residue. The segment at 344–475 (MTNGVFDILH…NIIKKIQKNS (132 aa)) is cytidylyltransferase.

In the N-terminal section; belongs to the carbohydrate kinase PfkB family. This sequence in the C-terminal section; belongs to the cytidylyltransferase family. In terms of assembly, homodimer.

It catalyses the reaction D-glycero-beta-D-manno-heptose 7-phosphate + ATP = D-glycero-beta-D-manno-heptose 1,7-bisphosphate + ADP + H(+). The catalysed reaction is D-glycero-beta-D-manno-heptose 1-phosphate + ATP + H(+) = ADP-D-glycero-beta-D-manno-heptose + diphosphate. Its pathway is nucleotide-sugar biosynthesis; ADP-L-glycero-beta-D-manno-heptose biosynthesis; ADP-L-glycero-beta-D-manno-heptose from D-glycero-beta-D-manno-heptose 7-phosphate: step 1/4. It participates in nucleotide-sugar biosynthesis; ADP-L-glycero-beta-D-manno-heptose biosynthesis; ADP-L-glycero-beta-D-manno-heptose from D-glycero-beta-D-manno-heptose 7-phosphate: step 3/4. In terms of biological role, catalyzes the phosphorylation of D-glycero-D-manno-heptose 7-phosphate at the C-1 position to selectively form D-glycero-beta-D-manno-heptose-1,7-bisphosphate. Its function is as follows. Catalyzes the ADP transfer from ATP to D-glycero-beta-D-manno-heptose 1-phosphate, yielding ADP-D-glycero-beta-D-manno-heptose. In Cronobacter sakazakii (strain ATCC BAA-894) (Enterobacter sakazakii), this protein is Bifunctional protein HldE.